The chain runs to 251 residues: CCN family member 5 (251 aa).

An N-terminal signal peptide occupies residues 1-23 (MRGNPLIHLLAISFLCILSMVYS). Residues 24-103 (QLCPAPCACP…EEDDGSCEVN (80 aa)) form the IGFBP N-terminal domain. 6 cysteine pairs are disulfide-bonded: Cys26–Cys50, Cys30–Cys52, Cys32–Cys53, Cys39–Cys56, Cys64–Cys78, and Cys70–Cys100. The VWFC domain maps to 98–164 (GSCEVNGRRY…GRCCPEWVCD (67 aa)). The 45-residue stretch at 195-239 (CPNWSTAWGPCSTTCGLGIATRVSNQNRFCQLEIQRRLCLSRPCL) folds into the TSP type-1 domain. Asn197 is a glycosylation site (N-linked (GlcNAc...) asparagine).

The protein belongs to the CCN family.

It is found in the secreted. In terms of biological role, may play an important role in modulating bone turnover. Promotes the adhesion of osteoblast cells and inhibits the binding of fibrinogen to integrin receptors. In addition, inhibits osteocalcin production. This is CCN family member 5 (Ccn5) from Mus musculus (Mouse).